Reading from the N-terminus, the 1690-residue chain is DNA-directed RNA polymerase subunit beta' (1690 aa).

Residues Cys63, Cys65, Cys78, and Cys81 each coordinate Zn(2+). Mg(2+)-binding residues include Asp753, Asp755, and Asp757. Cys1107, Cys1295, Cys1302, and Cys1305 together coordinate Zn(2+).

This sequence belongs to the RNA polymerase beta' chain family. In terms of assembly, the RNAP catalytic core consists of 2 alpha, 1 beta, 1 beta' and 1 omega subunit. When a sigma factor is associated with the core the holoenzyme is formed, which can initiate transcription. Mg(2+) serves as cofactor. The cofactor is Zn(2+).

It carries out the reaction RNA(n) + a ribonucleoside 5'-triphosphate = RNA(n+1) + diphosphate. DNA-dependent RNA polymerase catalyzes the transcription of DNA into RNA using the four ribonucleoside triphosphates as substrates. In Thermotoga neapolitana (strain ATCC 49049 / DSM 4359 / NBRC 107923 / NS-E), this protein is DNA-directed RNA polymerase subunit beta'.